Here is a 100-residue protein sequence, read N- to C-terminus: NADH-quinone oxidoreductase subunit K 2 (100 aa).

3 helical membrane-spanning segments follow: residues 4–24 (LWWS…GVLL), 28–48 (ILIV…NFIA), and 60–80 (IFAI…LGIL).

It belongs to the complex I subunit 4L family. As to quaternary structure, NDH-1 is composed of 14 different subunits. Subunits NuoA, H, J, K, L, M, N constitute the membrane sector of the complex.

It is found in the cell inner membrane. It carries out the reaction a quinone + NADH + 5 H(+)(in) = a quinol + NAD(+) + 4 H(+)(out). Its function is as follows. NDH-1 shuttles electrons from NADH, via FMN and iron-sulfur (Fe-S) centers, to quinones in the respiratory chain. The immediate electron acceptor for the enzyme in this species is believed to be ubiquinone. Couples the redox reaction to proton translocation (for every two electrons transferred, four hydrogen ions are translocated across the cytoplasmic membrane), and thus conserves the redox energy in a proton gradient. This is NADH-quinone oxidoreductase subunit K 2 from Rhizobium meliloti (strain 1021) (Ensifer meliloti).